The primary structure comprises 265 residues: Acrosomal protein SP-10 (265 aa).

An N-terminal signal peptide occupies residues 1 to 21 (MNRFLLLMSLYLLGSARGTSS). The tract at residues 62–181 (LNTLSEHGSS…EQASGAPISS (120 aa)) is disordered. Repeat copies occupy residues 66-70 (SEHGS), 71-75 (SEHGS), 85-88 (SGEH), 91-95 (SEHAS), 110-114 (VGEQP), 115-119 (SGEQP), 120-123 (SGEH), 125-129 (SGEQP), 135-139 (SGEQP), 140-144 (SDEQP), 145-148 (SGEH), 150-154 (SGEQP), 155-159 (SGEQA), 160-164 (SGEQP), 165-168 (SGEH), and 170-174 (SGEQA). Residues 66–95 (SEHGSSEHGSSKHTVAEHTSGEHAESEHAS) are 3 X 5 AA repeats of S-E-H-[GA]-S. Over residues 69-110 (GSSEHGSSKHTVAEHTSGEHAESEHASGEPAATEHAEGEHTV) the composition is skewed to basic and acidic residues. Residues 85–168 (SGEHAESEHA…ASGEQPSGEH (84 aa)) form a 4 X 4 AA repeats of S-G-E-H region. A 9 X 5 AA repeats of [SV]-G-E-Q-[PSA] region spans residues 110 to 174 (VGEQPSGEQP…SGEHASGEQA (65 aa)). The span at 152 to 163 (EQPSGEQASGEQ) shows a compositional bias: polar residues. A glycan (N-linked (GlcNAc...) asparagine) is linked at Asn-258.

Testis.

It localises to the cytoplasmic vesicle. Its subcellular location is the secretory vesicle. It is found in the acrosome. In Homo sapiens (Human), this protein is Acrosomal protein SP-10 (ACRV1).